Consider the following 874-residue polypeptide: Alanine--tRNA ligase (874 aa).

Residues histidine 564, histidine 568, cysteine 665, and histidine 669 each contribute to the Zn(2+) site.

The protein belongs to the class-II aminoacyl-tRNA synthetase family. Zn(2+) is required as a cofactor.

The protein localises to the cytoplasm. It carries out the reaction tRNA(Ala) + L-alanine + ATP = L-alanyl-tRNA(Ala) + AMP + diphosphate. Its function is as follows. Catalyzes the attachment of alanine to tRNA(Ala) in a two-step reaction: alanine is first activated by ATP to form Ala-AMP and then transferred to the acceptor end of tRNA(Ala). Also edits incorrectly charged Ser-tRNA(Ala) and Gly-tRNA(Ala) via its editing domain. This is Alanine--tRNA ligase from Paraburkholderia xenovorans (strain LB400).